A 119-amino-acid polypeptide reads, in one-letter code: MSESLHALARQLEQAIRASQPFQQLKQAYEDVRRDETAYQMFANFRDIQLRLHEKQMRGAAILPDEIEQAQKAMALAQQNAKLARLMALEQQMSMTIAEVQQIAMKPLEELHRSLMEEK.

It belongs to the UPF0342 family.

This is UPF0342 protein GTNG_0551 from Geobacillus thermodenitrificans (strain NG80-2).